The primary structure comprises 944 residues: Protein translocase subunit SecA (944 aa).

ATP is bound by residues Gln-77, 95–99 (GEGKT), and Asp-484. The interval 920–944 (EQEKQTRKKKKKKPHEDESSKTKIG) is disordered. The segment covering 933 to 944 (PHEDESSKTKIG) has biased composition (basic and acidic residues).

It belongs to the SecA family. As to quaternary structure, monomer and homodimer. Part of the essential Sec protein translocation apparatus which comprises SecA, SecYEG and auxiliary proteins SecDF. Other proteins may also be involved.

It is found in the cell membrane. It localises to the cytoplasm. It carries out the reaction ATP + H2O + cellular proteinSide 1 = ADP + phosphate + cellular proteinSide 2.. Part of the Sec protein translocase complex. Interacts with the SecYEG preprotein conducting channel. Has a central role in coupling the hydrolysis of ATP to the transfer of proteins into and across the cell membrane, serving as an ATP-driven molecular motor driving the stepwise translocation of polypeptide chains across the membrane. The sequence is that of Protein translocase subunit SecA from Mycoplasma mycoides subsp. mycoides SC (strain CCUG 32753 / NCTC 10114 / PG1).